A 255-amino-acid chain; its full sequence is 5-oxoprolinase subunit A 1 (255 aa).

The protein belongs to the LamB/PxpA family. As to quaternary structure, forms a complex composed of PxpA, PxpB and PxpC.

It carries out the reaction 5-oxo-L-proline + ATP + 2 H2O = L-glutamate + ADP + phosphate + H(+). In terms of biological role, catalyzes the cleavage of 5-oxoproline to form L-glutamate coupled to the hydrolysis of ATP to ADP and inorganic phosphate. In Agrobacterium fabrum (strain C58 / ATCC 33970) (Agrobacterium tumefaciens (strain C58)), this protein is 5-oxoprolinase subunit A 1.